Here is a 319-residue protein sequence, read N- to C-terminus: Beta-ketoacyl-[acyl-carrier-protein] synthase III (319 aa).

Residues Cys-112 and His-246 contribute to the active site. The interval 247–251 (QANFR) is ACP-binding. Asn-276 is a catalytic residue.

The protein belongs to the thiolase-like superfamily. FabH family. Homodimer.

The protein localises to the cytoplasm. The catalysed reaction is malonyl-[ACP] + acetyl-CoA + H(+) = 3-oxobutanoyl-[ACP] + CO2 + CoA. It functions in the pathway lipid metabolism; fatty acid biosynthesis. In terms of biological role, catalyzes the condensation reaction of fatty acid synthesis by the addition to an acyl acceptor of two carbons from malonyl-ACP. Catalyzes the first condensation reaction which initiates fatty acid synthesis and may therefore play a role in governing the total rate of fatty acid production. Possesses both acetoacetyl-ACP synthase and acetyl transacylase activities. Its substrate specificity determines the biosynthesis of branched-chain and/or straight-chain of fatty acids. This Pseudoalteromonas atlantica (strain T6c / ATCC BAA-1087) protein is Beta-ketoacyl-[acyl-carrier-protein] synthase III.